The chain runs to 204 residues: GTP cyclohydrolase 1 (204 aa).

Cys-93, His-96, and Cys-164 together coordinate Zn(2+).

It belongs to the GTP cyclohydrolase I family. As to quaternary structure, toroid-shaped homodecamer, composed of two pentamers of five dimers.

It carries out the reaction GTP + H2O = 7,8-dihydroneopterin 3'-triphosphate + formate + H(+). It participates in cofactor biosynthesis; 7,8-dihydroneopterin triphosphate biosynthesis; 7,8-dihydroneopterin triphosphate from GTP: step 1/1. The polypeptide is GTP cyclohydrolase 1 (Rhizobium meliloti (strain 1021) (Ensifer meliloti)).